A 255-amino-acid polypeptide reads, in one-letter code: tRNA pseudouridine synthase A (255 aa).

Catalysis depends on Asp-53, which acts as the Nucleophile. Tyr-113 provides a ligand contact to substrate.

The protein belongs to the tRNA pseudouridine synthase TruA family. In terms of assembly, homodimer.

It carries out the reaction uridine(38/39/40) in tRNA = pseudouridine(38/39/40) in tRNA. Functionally, formation of pseudouridine at positions 38, 39 and 40 in the anticodon stem and loop of transfer RNAs. In Acidiphilium cryptum (strain JF-5), this protein is tRNA pseudouridine synthase A.